Here is a 77-residue protein sequence, read N- to C-terminus: Defensin-B6 (77 aa).

Positions 1 to 20 are cleaved as a signal peptide; that stretch reads MKTLFFLSVFIFLLLHLSPG. 3 disulfides stabilise this stretch: C43–C70, C50–C64, and C54–C71.

Belongs to the beta-defensin family. In terms of tissue distribution, lowly expressed in spleen, kidney and lung.

Its subcellular location is the secreted. Its function is as follows. Has antimicrobial activity. The protein is Defensin-B6 of Ornithorhynchus anatinus (Duckbill platypus).